The following is a 611-amino-acid chain: tRNA uridine 5-carboxymethylaminomethyl modification enzyme MnmG (611 aa).

14 to 19 serves as a coordination point for FAD; that stretch reads GAGHAG. Residue 274-288 participates in NAD(+) binding; sequence GPRYCPSIEDKIVKF.

This sequence belongs to the MnmG family. Homodimer. Heterotetramer of two MnmE and two MnmG subunits. It depends on FAD as a cofactor.

The protein localises to the cytoplasm. In terms of biological role, NAD-binding protein involved in the addition of a carboxymethylaminomethyl (cmnm) group at the wobble position (U34) of certain tRNAs, forming tRNA-cmnm(5)s(2)U34. This chain is tRNA uridine 5-carboxymethylaminomethyl modification enzyme MnmG, found in Chlamydia caviae (strain ATCC VR-813 / DSM 19441 / 03DC25 / GPIC) (Chlamydophila caviae).